Reading from the N-terminus, the 946-residue chain is Clumping factor A (946 aa).

The N-terminal stretch at 1–39 (MNMKKKEKHAIRKKSIGVASVLVGTLIGFGLLSSKEADA) is a signal peptide. The YSIRK-G/S signaling motif signature appears at 9–20 (HAIRKKSIGVAS). 2 disordered regions span residues 34 to 199 (SKEA…SNKD) and 528 to 917 (FNNG…SEDE). The ligand binding A region stretch occupies residues 40-542 (SENSVTQSDS…GSGDGIDKPV (503 aa)). Over residues 47–65 (SDSASNESKSNDSSSVSAA) the composition is skewed to low complexity. Residues 71–111 (TNVSDTKTSSNTNNGETSVAQNPAQQETTQSALTNATTEET) are compositionally biased toward polar residues. Composition is skewed to low complexity over residues 117-131 (ATTA…ATTQ) and 142-161 (NQTS…SVNS). The span at 162-199 (PQNSTNAENVSTTQDTSTEATPSNNESAPQSTDASNKD) shows a compositional bias: polar residues. Residues 546–564 (QPDEPGEIEPIPEDSDSDP) show a composition bias toward acidic residues. Over residues 565 to 597 (GSDSGSDSNSDSGSDSGSDSTSDSGSDSASDSD) the composition is skewed to low complexity. The segment covering 598-874 (SASDSDSASD…DSDSESDSNS (277 aa)) has biased composition (acidic residues). Over residues 875–893 (DSESGSNNNVVPPNSPKNG) the composition is skewed to low complexity. A compositionally biased stretch (basic and acidic residues) spans 900 to 909 (NEAKDSKEPL). An LPXTG sorting signal motif is present at residues 909-913 (LPDTG). T912 is subject to Pentaglycyl murein peptidoglycan amidated threonine. The propeptide at 913–946 (GSEDEANTSLIWGLLASIGSLLLFRRKKENKDKK) is removed by sortase.

Belongs to the serine-aspartate repeat-containing protein (SDr) family.

The protein localises to the secreted. It is found in the cell wall. Functionally, cell surface-associated protein implicated in virulence. Promotes bacterial attachment exclusively to the gamma-chain of human fibrinogen. Induces formation of bacterial clumps. The polypeptide is Clumping factor A (clfA) (Staphylococcus aureus (strain MW2)).